Reading from the N-terminus, the 889-residue chain is DNA mismatch repair protein MutS (889 aa).

An ATP-binding site is contributed by 622–629; that stretch reads GPNMAGKS. The disordered stretch occupies residues 869-889; sequence QRVKRPEKAPADVTAETEDQE.

The protein belongs to the DNA mismatch repair MutS family.

Functionally, this protein is involved in the repair of mismatches in DNA. It is possible that it carries out the mismatch recognition step. This protein has a weak ATPase activity. The protein is DNA mismatch repair protein MutS of Desulfatibacillum aliphaticivorans.